Here is a 345-residue protein sequence, read N- to C-terminus: N-acetyl-gamma-glutamyl-phosphate reductase (345 aa).

The active site involves C149.

It belongs to the NAGSA dehydrogenase family. Type 1 subfamily.

The protein localises to the cytoplasm. It catalyses the reaction N-acetyl-L-glutamate 5-semialdehyde + phosphate + NADP(+) = N-acetyl-L-glutamyl 5-phosphate + NADPH + H(+). Its pathway is amino-acid biosynthesis; L-arginine biosynthesis; N(2)-acetyl-L-ornithine from L-glutamate: step 3/4. In terms of biological role, catalyzes the NADPH-dependent reduction of N-acetyl-5-glutamyl phosphate to yield N-acetyl-L-glutamate 5-semialdehyde. The protein is N-acetyl-gamma-glutamyl-phosphate reductase of Bacillus cereus (strain AH187).